Consider the following 142-residue polypeptide: ATP synthase epsilon chain (142 aa).

This sequence belongs to the ATPase epsilon chain family. As to quaternary structure, F-type ATPases have 2 components, CF(1) - the catalytic core - and CF(0) - the membrane proton channel. CF(1) has five subunits: alpha(3), beta(3), gamma(1), delta(1), epsilon(1). CF(0) has three main subunits: a, b and c.

It is found in the cell inner membrane. Produces ATP from ADP in the presence of a proton gradient across the membrane. This chain is ATP synthase epsilon chain, found in Shewanella loihica (strain ATCC BAA-1088 / PV-4).